The sequence spans 265 residues: Phosphate import ATP-binding protein PstB 1 (265 aa).

The region spanning 20–260 is the ABC transporter domain; sequence LSTNDLSVLY…PKGKITEDYI (241 aa). 53-60 contacts ATP; that stretch reads GASGSGKS.

It belongs to the ABC transporter superfamily. Phosphate importer (TC 3.A.1.7) family. As to quaternary structure, the complex is composed of two ATP-binding proteins (PstB), two transmembrane proteins (PstC and PstA) and a solute-binding protein (PstS).

Its subcellular location is the cell membrane. It catalyses the reaction phosphate(out) + ATP + H2O = ADP + 2 phosphate(in) + H(+). Its function is as follows. Part of the ABC transporter complex PstSACB involved in phosphate import. Responsible for energy coupling to the transport system. The polypeptide is Phosphate import ATP-binding protein PstB 1 (Lactobacillus acidophilus (strain ATCC 700396 / NCK56 / N2 / NCFM)).